Here is a 692-residue protein sequence, read N- to C-terminus: Elongation factor G (692 aa).

Positions 9–284 (HMVRNIGIAA…AVVDYLPAPD (276 aa)) constitute a tr-type G domain. GTP is bound by residues 18-25 (AHIDAGKT), 82-86 (DTPGH), and 136-139 (NKMD).

The protein belongs to the TRAFAC class translation factor GTPase superfamily. Classic translation factor GTPase family. EF-G/EF-2 subfamily.

It is found in the cytoplasm. Its function is as follows. Catalyzes the GTP-dependent ribosomal translocation step during translation elongation. During this step, the ribosome changes from the pre-translocational (PRE) to the post-translocational (POST) state as the newly formed A-site-bound peptidyl-tRNA and P-site-bound deacylated tRNA move to the P and E sites, respectively. Catalyzes the coordinated movement of the two tRNA molecules, the mRNA and conformational changes in the ribosome. The polypeptide is Elongation factor G (Campylobacter curvus (strain 525.92)).